Consider the following 148-residue polypeptide: NADPH-dependent 7-cyano-7-deazaguanine reductase (148 aa).

The active-site Thioimide intermediate is the Cys-50. The active-site Proton donor is Asp-57. Substrate contacts are provided by residues 72–74 and 91–92; these read VES and HE.

Belongs to the GTP cyclohydrolase I family. QueF type 1 subfamily.

Its subcellular location is the cytoplasm. The enzyme catalyses 7-aminomethyl-7-carbaguanine + 2 NADP(+) = 7-cyano-7-deazaguanine + 2 NADPH + 3 H(+). Its pathway is tRNA modification; tRNA-queuosine biosynthesis. In terms of biological role, catalyzes the NADPH-dependent reduction of 7-cyano-7-deazaguanine (preQ0) to 7-aminomethyl-7-deazaguanine (preQ1). The protein is NADPH-dependent 7-cyano-7-deazaguanine reductase of Helicobacter pylori (strain G27).